Consider the following 146-residue polypeptide: Hemoglobin subunit beta (146 aa).

In terms of domain architecture, Globin spans 2-146; it reads PFSAHEEKLI…VAAALSAEYH (145 aa). Heme b contacts are provided by His-63 and His-92.

It belongs to the globin family. In terms of assembly, heterotetramer of two alpha chains and two beta chains. Red blood cells.

Its function is as follows. Involved in oxygen transport from the lung to the various peripheral tissues. This chain is Hemoglobin subunit beta (HBB), found in Caiman crocodilus (Spectacled caiman).